A 207-amino-acid polypeptide reads, in one-letter code: GTP-binding protein RHO1 (207 aa).

Residue 18-25 (GDGACGKT) participates in GTP binding. The Effector region signature appears at 40-48 (YVPTVFDNY). GTP-binding positions include 65 to 69 (DTAGQ) and 123 to 126 (CKAD). Residues 187–207 (GKQGKSKAKSDKKKKKKCVVL) form a disordered region. The span at 190 to 207 (GKSKAKSDKKKKKKCVVL) shows a compositional bias: basic residues. The residue at position 204 (Cys-204) is a Cysteine methyl ester. Residue Cys-204 is the site of S-geranylgeranyl cysteine attachment. Positions 205–207 (VVL) are cleaved as a propeptide — removed in mature form.

It belongs to the small GTPase superfamily. Rho family.

It localises to the cell membrane. Its function is as follows. Involved in the regulation of actin polarization. Rho proteins are required for distinct steps during polarized hyphal growth of A.gossypii. In Eremothecium gossypii (strain ATCC 10895 / CBS 109.51 / FGSC 9923 / NRRL Y-1056) (Yeast), this protein is GTP-binding protein RHO1 (RHO1).